The chain runs to 641 residues: tRNA 5-methylaminomethyl-2-thiouridine biosynthesis bifunctional protein MnmC (641 aa).

Residues 1-219 (MTVSKILKQI…PYPICSAAVT (219 aa)) are tRNA (mnm(5)s(2)U34)-methyltransferase. Positions 232–641 (IGGGVASACL…GKALEVGVEV (410 aa)) are FAD-dependent cmnm(5)s(2)U34 oxidoreductase.

This sequence in the N-terminal section; belongs to the methyltransferase superfamily. tRNA (mnm(5)s(2)U34)-methyltransferase family. In the C-terminal section; belongs to the DAO family. It depends on FAD as a cofactor.

It is found in the cytoplasm. The enzyme catalyses 5-aminomethyl-2-thiouridine(34) in tRNA + S-adenosyl-L-methionine = 5-methylaminomethyl-2-thiouridine(34) in tRNA + S-adenosyl-L-homocysteine + H(+). Functionally, catalyzes the last two steps in the biosynthesis of 5-methylaminomethyl-2-thiouridine (mnm(5)s(2)U) at the wobble position (U34) in tRNA. Catalyzes the FAD-dependent demodification of cmnm(5)s(2)U34 to nm(5)s(2)U34, followed by the transfer of a methyl group from S-adenosyl-L-methionine to nm(5)s(2)U34, to form mnm(5)s(2)U34. The sequence is that of tRNA 5-methylaminomethyl-2-thiouridine biosynthesis bifunctional protein MnmC from Shewanella pealeana (strain ATCC 700345 / ANG-SQ1).